A 233-amino-acid chain; its full sequence is MGQKIDPRGFRLAVTRNWSSKWFANSQNFPGMLKEDIDVREFLKAKLKNASVSRITIERPAKSARITIHTARPGVVIGKKGEDIEVLKQELQKRMGVPVHVNIEEVRKPEIDAQIIADGIASQLEKRVMFRRAMKRAMQNAMRLGALGIKIMSSGRLNGIEIARTEWYREGRVPLHTLRADVDYATSEAHTTYGVIGIKVWVYKGDMKPGQVSAEPTQPEKKMRKGGRNAAAN.

Positions 39-107 (VREFLKAKLK…PVHVNIEEVR (69 aa)) constitute a KH type-2 domain. A disordered region spans residues 209–233 (PGQVSAEPTQPEKKMRKGGRNAAAN).

The protein belongs to the universal ribosomal protein uS3 family. Part of the 30S ribosomal subunit. Forms a tight complex with proteins S10 and S14.

Its function is as follows. Binds the lower part of the 30S subunit head. Binds mRNA in the 70S ribosome, positioning it for translation. This Laribacter hongkongensis (strain HLHK9) protein is Small ribosomal subunit protein uS3.